Reading from the N-terminus, the 287-residue chain is D-apionate oxidoisomerase (287 aa).

Residues glycine 13–methionine 15, glutamate 36, and aspartate 71 contribute to the NAD(+) site. Positions 116 and 186 each coordinate Zn(2+).

It belongs to the ApnO family. Requires Zn(2+) as cofactor.

It catalyses the reaction D-apionate + NAD(+) = 3-oxoisoapionate + NADH + H(+). It participates in carbohydrate metabolism. Involved in catabolism of D-apiose. Catalyzes the conversion of D-apionate to 3-oxo-isoapionate. The polypeptide is D-apionate oxidoisomerase (Blautia hydrogenotrophica (strain DSM 10507 / JCM 14656 / S5a33) (Ruminococcus hydrogenotrophicus)).